Consider the following 152-residue polypeptide: Large ribosomal subunit protein bL9 (152 aa).

It belongs to the bacterial ribosomal protein bL9 family.

In terms of biological role, binds to the 23S rRNA. This chain is Large ribosomal subunit protein bL9, found in Acaryochloris marina (strain MBIC 11017).